We begin with the raw amino-acid sequence, 292 residues long: GTP cyclohydrolase FolE2 (292 aa).

Belongs to the GTP cyclohydrolase IV family.

It catalyses the reaction GTP + H2O = 7,8-dihydroneopterin 3'-triphosphate + formate + H(+). It participates in cofactor biosynthesis; 7,8-dihydroneopterin triphosphate biosynthesis; 7,8-dihydroneopterin triphosphate from GTP: step 1/1. In terms of biological role, converts GTP to 7,8-dihydroneopterin triphosphate. In Staphylococcus epidermidis (strain ATCC 35984 / DSM 28319 / BCRC 17069 / CCUG 31568 / BM 3577 / RP62A), this protein is GTP cyclohydrolase FolE2.